A 241-amino-acid polypeptide reads, in one-letter code: Uridylate kinase (241 aa).

An ATP-binding site is contributed by 11–14 (KFSG). Residues 19–24 (GENGFG) are involved in allosteric activation by GTP. Gly-53 lines the UMP pocket. 2 residues coordinate ATP: Gly-54 and Arg-58. UMP contacts are provided by residues Asp-74 and 135–142 (TGNPFFTT). Residues Thr-162, Tyr-168, and Asp-171 each coordinate ATP.

Belongs to the UMP kinase family. As to quaternary structure, homohexamer.

The protein localises to the cytoplasm. It carries out the reaction UMP + ATP = UDP + ADP. Its pathway is pyrimidine metabolism; CTP biosynthesis via de novo pathway; UDP from UMP (UMPK route): step 1/1. Allosterically activated by GTP. Inhibited by UTP. Its function is as follows. Catalyzes the reversible phosphorylation of UMP to UDP. This chain is Uridylate kinase, found in Wolinella succinogenes (strain ATCC 29543 / DSM 1740 / CCUG 13145 / JCM 31913 / LMG 7466 / NCTC 11488 / FDC 602W) (Vibrio succinogenes).